Reading from the N-terminus, the 394-residue chain is Sorting nexin-3 (394 aa).

Disordered regions lie at residues 1 to 82 (MAFY…FGGA) and 116 to 226 (LGGA…SATA). 2 stretches are compositionally biased toward low complexity: residues 31-82 (AAPG…FGGA) and 131-178 (AHSS…AFPS). Residues 179 to 207 (GVSTSQYQPTSQGAQGASRFQSHTPSTLL) show a composition bias toward polar residues. In terms of domain architecture, PX spans 272–389 (NFLEVEVRSP…AAFLQDSGWS (118 aa)). Arg315, Ser317, Lys341, Arg346, and Arg355 together coordinate a 1,2-diacyl-sn-glycero-3-phospho-(1D-myo-inositol-3-phosphate).

The protein belongs to the sorting nexin family.

The protein localises to the cytoplasm. Its subcellular location is the golgi apparatus membrane. It localises to the prevacuolar compartment membrane. Functionally, required for retention of late Golgi membrane proteins. Component of the retrieval machinery that functions by direct interaction with the cytosolic tails of certain TGN membrane proteins during the sorting/budding process at the prevacuolar compartment. Binds phosphatidylinositol 3-phosphate (PtdIns(P3)). The polypeptide is Sorting nexin-3 (SNX3) (Mycosarcoma maydis (Corn smut fungus)).